Consider the following 380-residue polypeptide: Chaperone protein DnaJ (380 aa).

The J domain maps to 5 to 70 (DFYEVLGVSR…QKRAAYDQYG (66 aa)). The CR-type zinc finger occupies 135–213 (GCEKDIEIPT…CHGDGRVQKT (79 aa)). Zn(2+) contacts are provided by C148, C151, C165, C168, C187, C190, C201, and C204. CXXCXGXG motif repeat units lie at residues 148–155 (CEPCDGTG), 165–172 (CSTCHGQG), 187–194 (CPTCHGKG), and 201–208 (CNSCHGDG).

The protein belongs to the DnaJ family. As to quaternary structure, homodimer. The cofactor is Zn(2+).

The protein resides in the cytoplasm. Participates actively in the response to hyperosmotic and heat shock by preventing the aggregation of stress-denatured proteins and by disaggregating proteins, also in an autonomous, DnaK-independent fashion. Unfolded proteins bind initially to DnaJ; upon interaction with the DnaJ-bound protein, DnaK hydrolyzes its bound ATP, resulting in the formation of a stable complex. GrpE releases ADP from DnaK; ATP binding to DnaK triggers the release of the substrate protein, thus completing the reaction cycle. Several rounds of ATP-dependent interactions between DnaJ, DnaK and GrpE are required for fully efficient folding. Also involved, together with DnaK and GrpE, in the DNA replication of plasmids through activation of initiation proteins. The protein is Chaperone protein DnaJ of Aliivibrio salmonicida (strain LFI1238) (Vibrio salmonicida (strain LFI1238)).